Consider the following 449-residue polypeptide: 3-phosphoshikimate 1-carboxyvinyltransferase (449 aa).

Residues 1–30 are disordered; the sequence is MSHDSSPQPLTAAPGAPLRGRLRPPGDKSI. Residues K28, S29, and R33 each coordinate 3-phosphoshikimate. K28 contacts phosphoenolpyruvate. 2 residues coordinate phosphoenolpyruvate: G101 and R129. The 3-phosphoshikimate site is built by S175, Q177, D330, and K357. Position 177 (Q177) interacts with phosphoenolpyruvate. The Proton acceptor role is filled by D330. Phosphoenolpyruvate contacts are provided by R361 and R405.

The protein belongs to the EPSP synthase family. In terms of assembly, monomer.

Its subcellular location is the cytoplasm. It carries out the reaction 3-phosphoshikimate + phosphoenolpyruvate = 5-O-(1-carboxyvinyl)-3-phosphoshikimate + phosphate. The protein operates within metabolic intermediate biosynthesis; chorismate biosynthesis; chorismate from D-erythrose 4-phosphate and phosphoenolpyruvate: step 6/7. Its function is as follows. Catalyzes the transfer of the enolpyruvyl moiety of phosphoenolpyruvate (PEP) to the 5-hydroxyl of shikimate-3-phosphate (S3P) to produce enolpyruvyl shikimate-3-phosphate and inorganic phosphate. This is 3-phosphoshikimate 1-carboxyvinyltransferase from Methylobacterium radiotolerans (strain ATCC 27329 / DSM 1819 / JCM 2831 / NBRC 15690 / NCIMB 10815 / 0-1).